The chain runs to 228 residues: Phosphoglycolate phosphatase (228 aa).

Aspartate 9 acts as the Nucleophile in catalysis. 2 residues coordinate Mg(2+): aspartate 9 and aspartate 11. Position 151 (lysine 151) interacts with substrate. Residues aspartate 174 and aspartate 178 each coordinate Mg(2+).

Belongs to the archaeal SPP-like hydrolase family. Mg(2+) is required as a cofactor.

The catalysed reaction is 2-phosphoglycolate + H2O = glycolate + phosphate. Its function is as follows. Catalyzes the dephosphorylation of 2-phosphoglycolate. The chain is Phosphoglycolate phosphatase from Pyrobaculum aerophilum (strain ATCC 51768 / DSM 7523 / JCM 9630 / CIP 104966 / NBRC 100827 / IM2).